The sequence spans 167 residues: Piercer of microtubule wall 1 protein (167 aa).

The segment at 1–54 (MSEEKPQQSAEEPEPGEPKAKPAPEEPEPGEPKAKPAPEEPEPGEPKAKPAPEK) is disordered. The span at 16-54 (GEPKAKPAPEEPEPGEPKAKPAPEEPEPGEPKAKPAPEK) shows a compositional bias: basic and acidic residues.

Belongs to the PIERCE1 family. In terms of assembly, microtubule inner protein component of sperm flagellar doublet microtubules. Interacts with CFAP53, ODAD1 and ODAD3; the interactions link the outer dynein arms docking complex (ODA-DC) to the internal microtubule inner proteins (MIP) in cilium axoneme. As to expression, expressed in brain, lung, kidney and testis.

It is found in the cytoplasm. It localises to the cytoskeleton. Its subcellular location is the cilium axoneme. The protein resides in the flagellum axoneme. In terms of biological role, microtubule inner protein involved in the attachment of outer dynein arms (ODAs) to dynein-decorated doublet microtubules (DMTs) in cilia axoneme. Functions at the initial step of left-right asymmetry specification of the visceral organs. This chain is Piercer of microtubule wall 1 protein, found in Mus musculus (Mouse).